The sequence spans 263 residues: uncharacterized protein (263 aa).

31–38 (GPTGSGKT) lines the ATP pocket.

This sequence belongs to the CbbQ/NirQ/NorQ/GpvN family.

This is an uncharacterized protein from Staphylococcus haemolyticus (strain JCSC1435).